Consider the following 2346-residue polypeptide: Myomegalin (2346 aa).

4 coiled-coil regions span residues Arg41–Ala132, Asp162–Glu205, Asp238–Leu318, and Cys350–Leu684. The residue at position 252 (Glu252) is a Phosphoserine. The segment at Asn698–Lys732 is disordered. Thr704 is subject to Phosphothreonine. Positions Ser722–Lys732 are enriched in basic and acidic residues. Coiled coils occupy residues Gly743–Ala936, Leu1002–Ser1043, Ser1096–Val1124, Ser1212–Thr1240, Gly1346–Thr1385, and Gly1431–Asn1455. A disordered region spans residues Asp1193–Gln1214. Polar residues predominate over residues Ser1205–Gln1214. Positions Lys1551–Ser1642 constitute an Olduvai domain. Residues Ser1591 to Leu1600 are compositionally biased toward low complexity. Disordered stretches follow at residues Ser1591–Ser1614 and Glu1633–Gln1690. Polar residues predominate over residues Ala1652–Gln1690. Coiled coils occupy residues Val1736–Val1760 and Gly1840–Glu2077. 2 disordered regions span residues Gly2081–Lys2103 and Val2127–Val2156. Residues Leu2085 to Lys2103 are compositionally biased toward polar residues. The stretch at Glu2273–Gln2312 forms a coiled coil.

As to quaternary structure, interacts with PDE4D. Isoform 13 interacts with MAPRE1 and MAPRE3. Isoform 13 forms a pericentrosomal complex with AKAP9, CDK5RAP2 and EB1/MAPRE1; within this complex, may mediate MAPRE1-binding to CDK5RAP2. Interaction of isoform 13 with AKAP9 stabilizes both proteins. Isoform 13 interacts (via N-terminus) with CAMSAP2; this interaction is much stronger in the presence of AKAP9. In complex with AKAP9, Isoform 13 recruits CAMSAP2 to the Golgi apparatus. Isoform 13 interacts with unglycosylated LGALS3BP; this interaction may connect the pericentrosomal complex to the gamma-tubulin ring complex (gamma-TuRC) to promote microtubule assembly and acetylation. Highly expressed in adult and fetal heart, in skeletal muscle and, to a lower extent, in brain and placenta.

The protein localises to the golgi apparatus. It localises to the cytoplasm. Its subcellular location is the cytoskeleton. It is found in the microtubule organizing center. The protein resides in the centrosome. Functionally, functions as an anchor sequestering components of the cAMP-dependent pathway to Golgi and/or centrosomes. In terms of biological role, participates in microtubule dynamics, promoting microtubule assembly. Depending upon the cell context, may act at the level of the Golgi apparatus or that of the centrosome. In complex with AKAP9, recruits CAMSAP2 to the Golgi apparatus and tethers non-centrosomal minus-end microtubules to the Golgi, an important step for polarized cell movement. In complex with AKAP9, EB1/MAPRE1 and CDK5RAP2, contributes to microtubules nucleation and extension from the centrosome to the cell periphery, a crucial process for directed cell migration, mitotic spindle orientation and cell-cycle progression. This Homo sapiens (Human) protein is Myomegalin (PDE4DIP).